The chain runs to 379 residues: Glucose-1-phosphate adenylyltransferase (379 aa).

Residues Gly164, 179-180 (EK), and Ser190 each bind alpha-D-glucose 1-phosphate.

It belongs to the bacterial/plant glucose-1-phosphate adenylyltransferase family. As to quaternary structure, homotetramer.

It catalyses the reaction alpha-D-glucose 1-phosphate + ATP + H(+) = ADP-alpha-D-glucose + diphosphate. It participates in glycan biosynthesis; glycogen biosynthesis. Functionally, involved in the biosynthesis of ADP-glucose, a building block required for the elongation reactions to produce glycogen. Catalyzes the reaction between ATP and alpha-D-glucose 1-phosphate (G1P) to produce pyrophosphate and ADP-Glc. This is Glucose-1-phosphate adenylyltransferase from Streptococcus agalactiae serotype III (strain NEM316).